The sequence spans 556 residues: Double-strand-break repair protein rad21-like protein 1 (556 aa).

Belongs to the rad21 family. Component of some meiotic cohesin complex composed of the SMC1 (SMC1A or SMC1B) and SMC3 heterodimer attached via their hinge domain, RAD21L which link them, and STAG3.

Its subcellular location is the nucleus. The protein localises to the chromosome. Its function is as follows. Meiosis-specific component of some cohesin complex required during the initial steps of prophase I in male meiosis. Probably required during early meiosis in males for separation of sister chromatids and homologous chromosomes. Replaces RAD21 in premeiotic S phase (during early stages of prophase I), while RAD21 reappears in later stages of prophase I. Involved in synaptonemal complex assembly, synapsis initiation and crossover recombination between homologous chromosomes during prophase I. This chain is Double-strand-break repair protein rad21-like protein 1 (RAD21L1), found in Homo sapiens (Human).